The sequence spans 115 residues: DNA-directed RNA polymerase subunit Rpo4 (115 aa).

The protein belongs to the eukaryotic RPB4 RNA polymerase subunit family. As to quaternary structure, part of the RNA polymerase complex. Forms a stalk with Rpo7 that extends from the main structure.

It is found in the cytoplasm. The enzyme catalyses RNA(n) + a ribonucleoside 5'-triphosphate = RNA(n+1) + diphosphate. In terms of biological role, DNA-dependent RNA polymerase (RNAP) catalyzes the transcription of DNA into RNA using the four ribonucleoside triphosphates as substrates. This subunit is less well bound than the others. This Methanocaldococcus jannaschii (strain ATCC 43067 / DSM 2661 / JAL-1 / JCM 10045 / NBRC 100440) (Methanococcus jannaschii) protein is DNA-directed RNA polymerase subunit Rpo4.